An 83-amino-acid chain; its full sequence is Small ribosomal subunit protein bS20 (83 aa).

The segment at 1-21 is disordered; it reads MPNIKSAIKRVRTTETAEERN. The segment covering 12-21 has biased composition (basic and acidic residues); sequence RTTETAEERN.

It belongs to the bacterial ribosomal protein bS20 family.

Binds directly to 16S ribosomal RNA. The sequence is that of Small ribosomal subunit protein bS20 from Staphylococcus epidermidis (strain ATCC 35984 / DSM 28319 / BCRC 17069 / CCUG 31568 / BM 3577 / RP62A).